The sequence spans 239 residues: 7-cyano-7-deazaguanine synthase (239 aa).

Residue 12–22 (FSGGQDSATCL) coordinates ATP. Cys200, Cys215, Cys218, and Cys221 together coordinate Zn(2+).

It belongs to the QueC family. It depends on Zn(2+) as a cofactor.

The enzyme catalyses 7-carboxy-7-deazaguanine + NH4(+) + ATP = 7-cyano-7-deazaguanine + ADP + phosphate + H2O + H(+). It participates in purine metabolism; 7-cyano-7-deazaguanine biosynthesis. Its function is as follows. Catalyzes the ATP-dependent conversion of 7-carboxy-7-deazaguanine (CDG) to 7-cyano-7-deazaguanine (preQ(0)). This is 7-cyano-7-deazaguanine synthase from Hyphomonas neptunium (strain ATCC 15444).